The chain runs to 94 residues: Co-chaperonin GroES (94 aa).

The protein belongs to the GroES chaperonin family. Heptamer of 7 subunits arranged in a ring. Interacts with the chaperonin GroEL.

It is found in the cytoplasm. In terms of biological role, together with the chaperonin GroEL, plays an essential role in assisting protein folding. The GroEL-GroES system forms a nano-cage that allows encapsulation of the non-native substrate proteins and provides a physical environment optimized to promote and accelerate protein folding. GroES binds to the apical surface of the GroEL ring, thereby capping the opening of the GroEL channel. The polypeptide is Co-chaperonin GroES (Tetragenococcus halophilus (Pediococcus halophilus)).